The following is a 496-amino-acid chain: Cytosol aminopeptidase (496 aa).

Residues lysine 258 and aspartate 263 each coordinate Mn(2+). Residue lysine 270 is part of the active site. The Mn(2+) site is built by aspartate 281, aspartate 340, and glutamate 342. Residue arginine 344 is part of the active site.

This sequence belongs to the peptidase M17 family. Mn(2+) is required as a cofactor.

Its subcellular location is the cytoplasm. It carries out the reaction Release of an N-terminal amino acid, Xaa-|-Yaa-, in which Xaa is preferably Leu, but may be other amino acids including Pro although not Arg or Lys, and Yaa may be Pro. Amino acid amides and methyl esters are also readily hydrolyzed, but rates on arylamides are exceedingly low.. The enzyme catalyses Release of an N-terminal amino acid, preferentially leucine, but not glutamic or aspartic acids.. Functionally, presumably involved in the processing and regular turnover of intracellular proteins. Catalyzes the removal of unsubstituted N-terminal amino acids from various peptides. The sequence is that of Cytosol aminopeptidase (pepA) from Helicobacter pylori (strain ATCC 700392 / 26695) (Campylobacter pylori).